We begin with the raw amino-acid sequence, 100 residues long: Aspartyl/glutamyl-tRNA(Asn/Gln) amidotransferase subunit C (100 aa).

Belongs to the GatC family. Heterotrimer of A, B and C subunits.

It carries out the reaction L-glutamyl-tRNA(Gln) + L-glutamine + ATP + H2O = L-glutaminyl-tRNA(Gln) + L-glutamate + ADP + phosphate + H(+). The enzyme catalyses L-aspartyl-tRNA(Asn) + L-glutamine + ATP + H2O = L-asparaginyl-tRNA(Asn) + L-glutamate + ADP + phosphate + 2 H(+). In terms of biological role, allows the formation of correctly charged Asn-tRNA(Asn) or Gln-tRNA(Gln) through the transamidation of misacylated Asp-tRNA(Asn) or Glu-tRNA(Gln) in organisms which lack either or both of asparaginyl-tRNA or glutaminyl-tRNA synthetases. The reaction takes place in the presence of glutamine and ATP through an activated phospho-Asp-tRNA(Asn) or phospho-Glu-tRNA(Gln). The sequence is that of Aspartyl/glutamyl-tRNA(Asn/Gln) amidotransferase subunit C from Streptococcus pneumoniae (strain P1031).